We begin with the raw amino-acid sequence, 292 residues long: Tetrahydromethanopterin:alpha-L-glutamate ligase (292 aa).

The region spanning 103 to 286 (SFLMEVHKIP…IAQNLIDEAL (184 aa)) is the ATP-grasp domain. ATP-binding positions include lysine 138, 176 to 188 (QEFVNNPNNVYRD), and arginine 204. Residues aspartate 247, glutamate 259, and asparagine 261 each contribute to the Mg(2+) site. The Mn(2+) site is built by aspartate 247, glutamate 259, and asparagine 261.

This sequence belongs to the RimK family. MptN subfamily. Homodimer. Mg(2+) is required as a cofactor. The cofactor is Mn(2+).

It carries out the reaction 5,6,7,8-tetrahydromethanopterin + L-glutamate + ATP = 5,6,7,8-tetrahydrosarcinapterin + ADP + phosphate + H(+). The protein operates within cofactor biosynthesis; 5,6,7,8-tetrahydrosarcinapterin biosynthesis. Catalyzes the ATP or GTP-dependent addition of one L-glutamate molecule to tetrahydromethanopterin, producing tetrahydrosarcinapterin. The chain is Tetrahydromethanopterin:alpha-L-glutamate ligase (mptN) from Methanococcus maripaludis (strain DSM 14266 / JCM 13030 / NBRC 101832 / S2 / LL).